We begin with the raw amino-acid sequence, 287 residues long: 5'-3' exonuclease (287 aa).

The region spanning 172 to 270 (IYPKEFIDLL…ITSEEITLKK (99 aa)) is the 5'-3' exonuclease domain.

In terms of biological role, 5'-3' exonuclease acting preferentially on double-stranded DNA. The chain is 5'-3' exonuclease (pol) from Buchnera aphidicola subsp. Schizaphis graminum (strain Sg).